The primary structure comprises 140 residues: MNLEALCKEAELSFYDDELVSENGKKIYRIYVQKEGGVNLDDCARLSEILSPIFDVEPPVNGEYFLEVSSPGLERKLSKIEHFAKSIGELVKITTNEKEKIEAKIIAVDDENITLENLENKEKTTINFNDIKKARTFMEW.

It belongs to the RimP family.

It is found in the cytoplasm. Required for maturation of 30S ribosomal subunits. This Campylobacter jejuni subsp. doylei (strain ATCC BAA-1458 / RM4099 / 269.97) protein is Ribosome maturation factor RimP.